The chain runs to 131 residues: Lysosomal enzyme trafficking factor (131 aa).

A run of 2 helical transmembrane segments spans residues 8 to 28 (MGWIGVSLYLFVSAAAFYYVF) and 66 to 86 (LPFWLWATLFLIPYFQVFLFL).

Belongs to the LYSET family.

It localises to the golgi apparatus membrane. Required for mannose-6-phosphate-dependent trafficking of lysosomal enzymes. LYSET bridges GlcNAc-1-phosphate transferase (GNPTAB), to the membrane-bound transcription factor site-1 protease (MBTPS1), thus allowing proteolytic activation of the GNPTAB. GNPTAB is involved in the regulation of M6P-dependent Golgi-to-lysosome trafficking of lysosomal enzymes. LYSET is thus an essential factor for maturation and delivery of lysosomal hydrolases. The protein is Lysosomal enzyme trafficking factor (lyset-a) of Xenopus laevis (African clawed frog).